A 505-amino-acid chain; its full sequence is ATP synthase subunit alpha (505 aa).

Residue 169-176 participates in ATP binding; that stretch reads GDRKTGKT.

It belongs to the ATPase alpha/beta chains family. As to quaternary structure, F-type ATPases have 2 components, CF(1) - the catalytic core - and CF(0) - the membrane proton channel. CF(1) has five subunits: alpha(3), beta(3), gamma(1), delta(1), epsilon(1). CF(0) has three main subunits: a(1), b(2) and c(9-12). The alpha and beta chains form an alternating ring which encloses part of the gamma chain. CF(1) is attached to CF(0) by a central stalk formed by the gamma and epsilon chains, while a peripheral stalk is formed by the delta and b chains.

It localises to the cell membrane. It catalyses the reaction ATP + H2O + 4 H(+)(in) = ADP + phosphate + 5 H(+)(out). Its function is as follows. Produces ATP from ADP in the presence of a proton gradient across the membrane. The alpha chain is a regulatory subunit. The protein is ATP synthase subunit alpha of Pediococcus pentosaceus (strain ATCC 25745 / CCUG 21536 / LMG 10740 / 183-1w).